The following is a 263-amino-acid chain: MKKITISDLNNWKEVGEKFASITAYDASFAKIFEEQSMPVIIVGDSLGSVIQGKPTTLDVSIEELVYHTKCVRAGSPNAFIISDLPFMSYHTPEAACGSAAKLMKAGANMVKIEGGSWLINTVKMLTERAVPVCAHLGLMPQAVNIYGGYKLQGKTEEQATKMLENAKELQRAGAQALILECIPAKLARQITLELHIPVIGIGAGNDTDGQVLVMHDILGISANYIPRFSRNFLAETGSIEAAVKKYIDEVKQQTFPGEKHCF.

Mg(2+) contacts are provided by D45 and D84. 3-methyl-2-oxobutanoate-binding positions include 45–46, D84, and K112; that span reads DS. Residue E114 participates in Mg(2+) binding. The active-site Proton acceptor is the E181.

This sequence belongs to the PanB family. In terms of assembly, homodecamer; pentamer of dimers. Mg(2+) serves as cofactor.

It localises to the cytoplasm. It carries out the reaction 3-methyl-2-oxobutanoate + (6R)-5,10-methylene-5,6,7,8-tetrahydrofolate + H2O = 2-dehydropantoate + (6S)-5,6,7,8-tetrahydrofolate. It participates in cofactor biosynthesis; (R)-pantothenate biosynthesis; (R)-pantoate from 3-methyl-2-oxobutanoate: step 1/2. Functionally, catalyzes the reversible reaction in which hydroxymethyl group from 5,10-methylenetetrahydrofolate is transferred onto alpha-ketoisovalerate to form ketopantoate. This chain is 3-methyl-2-oxobutanoate hydroxymethyltransferase 2, found in Aliivibrio fischeri (strain ATCC 700601 / ES114) (Vibrio fischeri).